A 772-amino-acid chain; its full sequence is Polyribonucleotide nucleotidyltransferase (772 aa).

Residues D488 and D494 each coordinate Mg(2+). Residues 555 to 614 enclose the KH domain; the sequence is PRLTTLKINPEKIRDVIGKGGAVIRGLQEETGTTINIDEDGTITIASTDPEKAEFAKKRI. The S1 motif domain occupies 624-692; the sequence is GKVYEGPVTK…EKGRVKLSMK (69 aa). The tract at residues 690-772 is disordered; it reads SMKALTERPA…QPYAPRDSQE (83 aa). A compositionally biased stretch (basic and acidic residues) spans 703-740; sequence YSERPPREDRGDRGDRGGERRERSDRGDRGGDRGERAP. A compositionally biased stretch (low complexity) spans 743-757; it reads NSEQQQQPRSNEQQP.

It belongs to the polyribonucleotide nucleotidyltransferase family. Mg(2+) is required as a cofactor.

It is found in the cytoplasm. The catalysed reaction is RNA(n+1) + phosphate = RNA(n) + a ribonucleoside 5'-diphosphate. Functionally, involved in mRNA degradation. Catalyzes the phosphorolysis of single-stranded polyribonucleotides processively in the 3'- to 5'-direction. This chain is Polyribonucleotide nucleotidyltransferase, found in Variovorax paradoxus (strain S110).